Reading from the N-terminus, the 1390-residue chain is DNA-directed RNA polymerase subunit beta (1390 aa).

Residues 556–576 form a disordered region; the sequence is KLADQDAENDPDSDLGTKSSN.

This sequence belongs to the RNA polymerase beta chain family. As to quaternary structure, the RNAP catalytic core consists of 2 alpha, 1 beta, 1 beta' and 1 omega subunit. When a sigma factor is associated with the core the holoenzyme is formed, which can initiate transcription.

It carries out the reaction RNA(n) + a ribonucleoside 5'-triphosphate = RNA(n+1) + diphosphate. Its function is as follows. DNA-dependent RNA polymerase catalyzes the transcription of DNA into RNA using the four ribonucleoside triphosphates as substrates. This chain is DNA-directed RNA polymerase subunit beta, found in Mycoplasmoides gallisepticum (strain R(low / passage 15 / clone 2)) (Mycoplasma gallisepticum).